The following is a 397-amino-acid chain: Acetylornithine aminotransferase (397 aa).

F129 lines the pyridoxal 5'-phosphate pocket. R132 serves as a coordination point for N(2)-acetyl-L-ornithine. 214-217 (DEVQ) contributes to the pyridoxal 5'-phosphate binding site. K243 carries the post-translational modification N6-(pyridoxal phosphate)lysine. S271 provides a ligand contact to N(2)-acetyl-L-ornithine. T272 lines the pyridoxal 5'-phosphate pocket.

This sequence belongs to the class-III pyridoxal-phosphate-dependent aminotransferase family. ArgD subfamily. As to quaternary structure, homodimer. The cofactor is pyridoxal 5'-phosphate.

The protein resides in the cytoplasm. The catalysed reaction is N(2)-acetyl-L-ornithine + 2-oxoglutarate = N-acetyl-L-glutamate 5-semialdehyde + L-glutamate. Its pathway is amino-acid biosynthesis; L-arginine biosynthesis; N(2)-acetyl-L-ornithine from L-glutamate: step 4/4. The chain is Acetylornithine aminotransferase from Neisseria meningitidis serogroup A / serotype 4A (strain DSM 15465 / Z2491).